Consider the following 362-residue polypeptide: Putative F-box protein At3g25750 (362 aa).

The F-box domain maps to 4–52; it reads TEWSDLPEELLDLIANRYSSNIDVLRIRSTCKSWRSAVAMSKERLQFRF.

The polypeptide is Putative F-box protein At3g25750 (Arabidopsis thaliana (Mouse-ear cress)).